Reading from the N-terminus, the 137-residue chain is DNA-directed RNA polymerase I subunit RPA14 (137 aa).

The segment at 100–137 (PPAQDFSAAPIQVSTTEKKETSIGVSATGGKKTTFADE) is disordered. Serine 121 carries the phosphoserine modification.

As to quaternary structure, component of the RNA polymerase I (Pol I) complex consisting of 14 subunits: RPA135, RPA190, RPC40, RPA14, RPB5, RPO26, RPA43, RPB8, RPA12, RPB10, RPC19, RPC10, RPA49 and RPA34. The complex is composed of a horseshoe-shaped core containing ten subunits (RPA135, RPA190, RPB5, RPO26, RPB8, RPB10, RPC10, RPA12, RPC19 and RPC40) where RPA135 and RPA190 form the DNA-binding cleft. Outside of the core, RPA14 and RPA43 form the stalk that mediates interactions with transcription initiation factors and newly synthesized RNA. The N-terminus is blocked.

Its subcellular location is the nucleus. It is found in the nucleolus. In terms of biological role, DNA-dependent RNA polymerases catalyze the transcription of DNA into RNA using the four ribonucleoside triphosphates as substrates. Component of RNA polymerase I (Pol I) which synthesizes ribosomal RNA precursors. RPA14 seems to play a role in the stability of subunits RPO26 and RPA43. In vitro, the RPA14-RPA43 subcomplex binds single-stranded RNA. The polypeptide is DNA-directed RNA polymerase I subunit RPA14 (RPA14) (Saccharomyces cerevisiae (strain ATCC 204508 / S288c) (Baker's yeast)).